We begin with the raw amino-acid sequence, 143 residues long: Deoxyuridine 5'-triphosphate nucleotidohydrolase (143 aa).

Ser-65, Val-78, Arg-132, and Gly-138 together coordinate dUMP.

This sequence belongs to the dUTPase family. In terms of assembly, homotrimer. Mg(2+) serves as cofactor.

It carries out the reaction dUTP + H2O = dUMP + diphosphate + H(+). It participates in pyrimidine metabolism; dUMP biosynthesis; dUMP from dCTP (dUTP route): step 2/2. Its function is as follows. Involved in nucleotide metabolism via production of dUMP, the immediate precursor of thymidine nucleotides, and decreases the intracellular concentration of dUTP so that uracil cannot be incorporated into DNA. This Antonospora locustae (Microsporidian parasite) protein is Deoxyuridine 5'-triphosphate nucleotidohydrolase (DUT1).